A 593-amino-acid polypeptide reads, in one-letter code: La-related protein 7 (593 aa).

The span at 1–11 (MTAIETDTPSN) shows a compositional bias: polar residues. The tract at residues 1-28 (MTAIETDTPSNKVKEDESTDLRKDREKK) is disordered. Positions 12–24 (KVKEDESTDLRKD) are enriched in basic and acidic residues. The region spanning 30–121 (RSRVKQLLAD…RRRFPLGEKP (92 aa)) is the HTH La-type RNA-binding domain. One can recognise an RRM domain in the interval 127-205 (RTVYVELLPK…PRKAGMFPKT (79 aa)). The disordered stretch occupies residues 191 to 363 (PPEEAPRKAG…STEEEKDAVD (173 aa)). Residues 231 to 240 (KKKKKKKSKA) are compositionally biased toward basic residues. The span at 248–259 (AEEDTKEQDMDI) shows a compositional bias: acidic residues. Composition is skewed to basic and acidic residues over residues 295–307 (ERAE…EKVR), 314–340 (SSSE…DEKP), and 348–363 (QECK…DAVD). A xRRM domain is found at 461–574 (QFVCGVIGKI…TEKLIAKAEK (114 aa)).

Belongs to the LARP7 family. Core component of the 7SK RNP complex. Associates with box C/D small nucleolar ribonucleoprotein (snoRNP) complexes.

It localises to the nucleus. It is found in the nucleoplasm. Functionally, RNA-binding protein that specifically binds distinct small nuclear RNA (snRNAs) and regulates their processing and function. Specifically binds the 7SK snRNA (7SK RNA) and acts as a core component of the 7SK ribonucleoprotein (RNP) complex, thereby acting as a negative regulator of transcription elongation by RNA polymerase II. The 7SK RNP complex sequesters the positive transcription elongation factor b (P-TEFb) in a large inactive 7SK RNP complex preventing RNA polymerase II phosphorylation and subsequent transcriptional elongation. The 7SK RNP complex also promotes snRNA gene transcription by RNA polymerase II via interaction with the little elongation complex (LEC). LARP7 specifically binds to the highly conserved 3'-terminal U-rich stretch of 7SK RNA; on stimulation, remains associated with 7SK RNA, whereas P-TEFb is released from the complex. LARP7 also acts as a regulator of mRNA splicing fidelity by promoting U6 snRNA processing. Specifically binds U6 snRNAs and associates with a subset of box C/D RNP complexes: promotes U6 snRNA 2'-O-methylation by facilitating U6 snRNA loading into box C/D RNP complexes. U6 snRNA 2'-O-methylation is required for mRNA splicing fidelity. This Xenopus tropicalis (Western clawed frog) protein is La-related protein 7.